A 431-amino-acid polypeptide reads, in one-letter code: Ribosomal RNA small subunit methyltransferase B (431 aa).

Residues 254 to 260 (CAAPGGK), Asp-277, Asp-303, and Asp-322 each bind S-adenosyl-L-methionine. Cys-375 functions as the Nucleophile in the catalytic mechanism.

The protein belongs to the class I-like SAM-binding methyltransferase superfamily. RsmB/NOP family.

Its subcellular location is the cytoplasm. It catalyses the reaction cytidine(967) in 16S rRNA + S-adenosyl-L-methionine = 5-methylcytidine(967) in 16S rRNA + S-adenosyl-L-homocysteine + H(+). Specifically methylates the cytosine at position 967 (m5C967) of 16S rRNA. The sequence is that of Ribosomal RNA small subunit methyltransferase B from Klebsiella pneumoniae subsp. pneumoniae (strain ATCC 700721 / MGH 78578).